A 176-amino-acid polypeptide reads, in one-letter code: Protein GrpE (176 aa).

Positions methionine 1–glutamate 31 are disordered.

Belongs to the GrpE family. In terms of assembly, homodimer.

It localises to the cytoplasm. Its function is as follows. Participates actively in the response to hyperosmotic and heat shock by preventing the aggregation of stress-denatured proteins, in association with DnaK and GrpE. It is the nucleotide exchange factor for DnaK and may function as a thermosensor. Unfolded proteins bind initially to DnaJ; upon interaction with the DnaJ-bound protein, DnaK hydrolyzes its bound ATP, resulting in the formation of a stable complex. GrpE releases ADP from DnaK; ATP binding to DnaK triggers the release of the substrate protein, thus completing the reaction cycle. Several rounds of ATP-dependent interactions between DnaJ, DnaK and GrpE are required for fully efficient folding. The polypeptide is Protein GrpE (Campylobacter jejuni subsp. doylei (strain ATCC BAA-1458 / RM4099 / 269.97)).